A 178-amino-acid polypeptide reads, in one-letter code: Ribosome maturation factor RimM (178 aa).

The 79-residue stretch at 100–178 (AADEYYWYQL…VMRVEWDADF (79 aa)) folds into the PRC barrel domain.

This sequence belongs to the RimM family. As to quaternary structure, binds ribosomal protein uS19.

It is found in the cytoplasm. In terms of biological role, an accessory protein needed during the final step in the assembly of 30S ribosomal subunit, possibly for assembly of the head region. Essential for efficient processing of 16S rRNA. May be needed both before and after RbfA during the maturation of 16S rRNA. It has affinity for free ribosomal 30S subunits but not for 70S ribosomes. This is Ribosome maturation factor RimM from Pseudomonas putida (strain W619).